Reading from the N-terminus, the 231-residue chain is Endonuclease NucS (231 aa).

It belongs to the NucS endonuclease family.

The protein localises to the cytoplasm. Functionally, cleaves both 3' and 5' ssDNA extremities of branched DNA structures. In Arthrobacter sp. (strain FB24), this protein is Endonuclease NucS.